Reading from the N-terminus, the 229-residue chain is Synaptogyrin-3 (229 aa).

Met-1 is modified (N-acetylmethionine). In terms of domain architecture, MARVEL spans 20–172 (FARRPQTLLR…LTVKALQRFR (153 aa)). The next 4 membrane-spanning stretches (helical) occupy residues 30 to 50 (VVSW…GYVN), 70 to 90 (FGVV…LLDV), 105 to 125 (VLLD…GFCF), and 148 to 168 (AAIA…VKAL). A compositionally biased stretch (polar residues) spans 209-223 (QSPPFTETLDTSSKG). The segment at 209–229 (QSPPFTETLDTSSKGYQVPAY) is disordered.

The protein belongs to the synaptogyrin family. As to quaternary structure, interacts (via N-terminus) with SLC6A3 (via N-terminus). May interact with VMAT2. As to expression, specifically expressed in brain. Found in the brain across the dorsal and ventral corpus striatum as well as in the cortex.

The protein localises to the cytoplasmic vesicle. It is found in the secretory vesicle. The protein resides in the synaptic vesicle membrane. Its subcellular location is the synapse. Its function is as follows. May play a role in regulated exocytosis. May indirectly regulate the activity of the plasma membrane dopamine transporter SLC6A3 and thereby regulate dopamine transport back from the synaptic cleft into the presynaptic terminal. This is Synaptogyrin-3 from Mus musculus (Mouse).